A 512-amino-acid chain; its full sequence is Respiratory nitrate reductase 1 beta chain (512 aa).

3 4Fe-4S ferredoxin-type domains span residues 7-35, 175-206, and 208-237; these read VGMV…SREG, TFMM…KREE, and GIVL…FNWK. The [4Fe-4S] cluster site is built by Cys-16, Cys-19, Cys-22, Cys-26, Cys-184, Cys-187, and Cys-192. [3Fe-4S] cluster is bound by residues Cys-196, Cys-217, and Cys-223. Residues Cys-227, Cys-244, Cys-247, Cys-259, and Cys-263 each coordinate [4Fe-4S] cluster.

As to quaternary structure, dimer of heterotrimers each composed of an alpha, a beta and a gamma chain. Alpha and beta are catalytic chains; gamma chains are involved in binding the enzyme complex to the cytoplasmic membrane. It depends on [4Fe-4S] cluster as a cofactor. [3Fe-4S] cluster is required as a cofactor.

It localises to the cell membrane. It catalyses the reaction nitrate + a quinol = a quinone + nitrite + H2O. Functionally, the nitrate reductase enzyme complex allows E.coli to use nitrate as an electron acceptor during anaerobic growth. The beta chain is an electron transfer unit containing four cysteine clusters involved in the formation of iron-sulfur centers. Electrons are transferred from the gamma chain to the molybdenum cofactor of the alpha subunit. The chain is Respiratory nitrate reductase 1 beta chain (narH) from Escherichia coli (strain K12).